The sequence spans 485 residues: Rop guanine nucleotide exchange factor 2 (485 aa).

The disordered stretch occupies residues 1–36 (MENLPNHEENDDVGYHQSPGPIDPNDHSASETPVYS). The PRONE domain maps to 107–485 (LAVQEISEPE…YVDKTMRGEE (379 aa)).

In terms of assembly, interacts with ARC10/ROP11. In terms of tissue distribution, expressed in the vascular tissues of roots, leaves, sepals, petals and siliques.

Its function is as follows. Guanine-nucleotide exchange factor (GEF) that acts as an activator of Rop (Rho of plants) GTPases by promoting the exchange of GDP for GTP. This is Rop guanine nucleotide exchange factor 2 (ROPGEF2) from Arabidopsis thaliana (Mouse-ear cress).